The following is a 185-amino-acid chain: Large ribosomal subunit protein uL10 (185 aa).

The segment at 165–185 is disordered; that stretch reads LRAKKEEQGGAGTPAPAEAAE.

Belongs to the universal ribosomal protein uL10 family. In terms of assembly, part of the ribosomal stalk of the 50S ribosomal subunit. The N-terminus interacts with L11 and the large rRNA to form the base of the stalk. The C-terminus forms an elongated spine to which L12 dimers bind in a sequential fashion forming a multimeric L10(L12)X complex.

In terms of biological role, forms part of the ribosomal stalk, playing a central role in the interaction of the ribosome with GTP-bound translation factors. The chain is Large ribosomal subunit protein uL10 from Streptomyces griseus subsp. griseus (strain JCM 4626 / CBS 651.72 / NBRC 13350 / KCC S-0626 / ISP 5235).